The primary structure comprises 721 residues: Sodium/hydrogen exchanger 6 (721 aa).

Positions 1–44 are disordered; it reads MTSPKPWARSAGSCQTQRAVRTRKKECREEGESDTEKGPAASSA. Basic and acidic residues predominate over residues 26–37; sequence ECREEGESDTEK. 12 helical membrane-spanning segments follow: residues 91–111, 123–143, 196–216, 231–251, 272–292, 298–318, 344–364, 388–412, 434–454, 456–476, 499–519, and 535–555; these read SANL…IWLF, GLAM…IHVP, VTFD…FYAG, ILAY…SIMY, CLLF…AIFH, VELY…AIVL, IGIF…TGVV, MSWS…FCGI, FELL…LTLF, FQNH…IFLG, NFQH…ALAI, and LLIV…MLSC.

This sequence belongs to the monovalent cation:proton antiporter 1 (CPA1) transporter (TC 2.A.36) family. As to quaternary structure, homodimer. Interacts with RACK1; regulates the distribution of SLC9A6 between endosomes and the plasma membrane. Ubiquitinated (in vitro). In terms of processing, glycosylated.

Its subcellular location is the endosome membrane. It is found in the recycling endosome membrane. It localises to the early endosome membrane. The protein localises to the late endosome membrane. The protein resides in the cell membrane. The catalysed reaction is Na(+)(in) + H(+)(out) = Na(+)(out) + H(+)(in). It catalyses the reaction K(+)(in) + H(+)(out) = K(+)(out) + H(+)(in). Its function is as follows. Endosomal Na(+), K(+)/H(+) antiporter. Mediates the electroneutral exchange of endosomal luminal H(+) for a cytosolic Na(+) or K(+). By facilitating proton efflux, SLC9A6 counteracts the acidity generated by vacuolar (V)-ATPase, thereby limiting luminal acidification. Responsible for alkalizing and maintaining the endosomal pH, and consequently in, e.g., endosome maturation and trafficking of recycling endosomal cargo. Plays a critical role during neurodevelopment by regulating synaptic development and plasticity. Implicated in the maintenance of cell polarity in a manner that is dependent on its ability to modulate intravesicular pH. Regulates intracelular pH in some specialized cells, osteoclasts and stereocilia where this transporter localizes to the plasma membrane. This Rattus norvegicus (Rat) protein is Sodium/hydrogen exchanger 6.